We begin with the raw amino-acid sequence, 304 residues long: Recombination-associated protein RdgC (304 aa).

The protein belongs to the RdgC family.

It is found in the cytoplasm. It localises to the nucleoid. In terms of biological role, may be involved in recombination. In Dechloromonas aromatica (strain RCB), this protein is Recombination-associated protein RdgC.